A 291-amino-acid polypeptide reads, in one-letter code: Beta-lactamase CTX-M-15 (291 aa).

Positions 1–28 (MVKKSLRQFTLMATATVTLLLGSVPLYA) are cleaved as a signal peptide. Catalysis depends on S73, which acts as the Nucleophile; acyl-ester intermediate. A beta-lactam-binding residues include K76, S133, E169, and S240.

This sequence belongs to the class-A beta-lactamase family. As to quaternary structure, monomer.

It is found in the secreted. The enzyme catalyses a beta-lactam + H2O = a substituted beta-amino acid. With respect to regulation, inhibited by the beta-lactamase-blocking agents clavulanic acid and avibactam, via a covalent binding to Ser-73. Extended-spectrum beta-lactamase (ESBL) which confers resistance to penicillins, as well as first, second, third and fourth-generation cephalosporins. Has cefotaxime- and ceftazidime-hydrolyzing activity. Inactive against the carbapenem antibiotics, imipenem, meropenem and ertapenem. The sequence is that of Beta-lactamase CTX-M-15 from Escherichia coli O25b:H4.